Consider the following 77-residue polypeptide: Sec-independent protein translocase protein TatA (77 aa).

The chain crosses the membrane as a helical span at residues 1 to 21 (MGSFSIWHWLIVLVIVMLVFG). The disordered stretch occupies residues 40–77 (KDGMKEGNTDEPATPTPAKELRDSTTIDVEAKEKSRQQ). The segment covering 58-77 (KELRDSTTIDVEAKEKSRQQ) has biased composition (basic and acidic residues).

This sequence belongs to the TatA/E family. The Tat system comprises two distinct complexes: a TatABC complex, containing multiple copies of TatA, TatB and TatC subunits, and a separate TatA complex, containing only TatA subunits. Substrates initially bind to the TatABC complex, which probably triggers association of the separate TatA complex to form the active translocon.

It localises to the cell inner membrane. Functionally, part of the twin-arginine translocation (Tat) system that transports large folded proteins containing a characteristic twin-arginine motif in their signal peptide across membranes. TatA could form the protein-conducting channel of the Tat system. The protein is Sec-independent protein translocase protein TatA of Cupriavidus metallidurans (strain ATCC 43123 / DSM 2839 / NBRC 102507 / CH34) (Ralstonia metallidurans).